Here is a 347-residue protein sequence, read N- to C-terminus: Protein RecA (347 aa).

An ATP-binding site is contributed by 67 to 74; that stretch reads GPESSGKT.

The protein belongs to the RecA family.

It localises to the cytoplasm. Functionally, can catalyze the hydrolysis of ATP in the presence of single-stranded DNA, the ATP-dependent uptake of single-stranded DNA by duplex DNA, and the ATP-dependent hybridization of homologous single-stranded DNAs. It interacts with LexA causing its activation and leading to its autocatalytic cleavage. The protein is Protein RecA of Helicobacter acinonychis (strain Sheeba).